Reading from the N-terminus, the 81-residue chain is UPF0729 protein C18orf32 homolog (81 aa).

A compositionally biased stretch (polar residues) spans 45–58; the sequence is AASDQKVSEKSNGT. The segment at 45–81 is disordered; the sequence is AASDQKVSEKSNGTCKPESNGEATANGSTIAADKKTD.

It belongs to the UPF0729 family.

The chain is UPF0729 protein C18orf32 homolog from Anoplopoma fimbria (Sablefish).